Reading from the N-terminus, the 268-residue chain is Thymidylate synthase (268 aa).

Arg-27 provides a ligand contact to dUMP. His-57 contributes to the (6R)-5,10-methylene-5,6,7,8-tetrahydrofolate binding site. 132-133 (RR) is a dUMP binding site. Cys-152 functions as the Nucleophile in the catalytic mechanism. DUMP contacts are provided by residues 172–175 (RSAD), Asn-183, and 213–215 (HVY). A (6R)-5,10-methylene-5,6,7,8-tetrahydrofolate-binding site is contributed by Asp-175. A (6R)-5,10-methylene-5,6,7,8-tetrahydrofolate-binding site is contributed by Ala-267.

It belongs to the thymidylate synthase family. Bacterial-type ThyA subfamily. As to quaternary structure, homodimer.

Its subcellular location is the cytoplasm. The enzyme catalyses dUMP + (6R)-5,10-methylene-5,6,7,8-tetrahydrofolate = 7,8-dihydrofolate + dTMP. Its pathway is pyrimidine metabolism; dTTP biosynthesis. Functionally, catalyzes the reductive methylation of 2'-deoxyuridine-5'-monophosphate (dUMP) to 2'-deoxythymidine-5'-monophosphate (dTMP) while utilizing 5,10-methylenetetrahydrofolate (mTHF) as the methyl donor and reductant in the reaction, yielding dihydrofolate (DHF) as a by-product. This enzymatic reaction provides an intracellular de novo source of dTMP, an essential precursor for DNA biosynthesis. The protein is Thymidylate synthase of Kineococcus radiotolerans (strain ATCC BAA-149 / DSM 14245 / SRS30216).